Here is a 374-residue protein sequence, read N- to C-terminus: Glutamate 5-kinase (374 aa).

An ATP-binding site is contributed by K16. Substrate-binding residues include S56, D143, and N155. Position 175-176 (175-176 (TD)) interacts with ATP. In terms of domain architecture, PUA spans 282-360 (RGRVVLDAGA…SEIEAVLGYV (79 aa)).

Belongs to the glutamate 5-kinase family.

It localises to the cytoplasm. It carries out the reaction L-glutamate + ATP = L-glutamyl 5-phosphate + ADP. Its pathway is amino-acid biosynthesis; L-proline biosynthesis; L-glutamate 5-semialdehyde from L-glutamate: step 1/2. Functionally, catalyzes the transfer of a phosphate group to glutamate to form L-glutamate 5-phosphate. In Ralstonia pickettii (strain 12J), this protein is Glutamate 5-kinase.